The chain runs to 122 residues: uncharacterized protein (122 aa).

3 helical membrane passes run 33–53, 58–78, and 97–117; these read ALGL…LTIP, VLGV…LLRW, and PGYL…LVVA.

It to E.coli YidH.

It localises to the cell membrane. This is an uncharacterized protein from Mycobacterium tuberculosis (strain CDC 1551 / Oshkosh).